Reading from the N-terminus, the 492-residue chain is WD repeat-containing protein JIP5 (492 aa).

WD repeat units follow at residues 127–166 (RHKG…VVKK), 178–217 (KKND…LSNS), 236–274 (RSAY…ILIS), 276–317 (DQED…LEDQ), and 365–405 (RNHN…VEEN). 2 stretches are compositionally biased toward acidic residues: residues 404–414 (ENASVESDSDE) and 422–433 (DLSDDTSSDDET). A disordered region spans residues 404-472 (ENASVESDSD…SKSVKKRKIM (69 aa)). The span at 449–462 (KDLKEDHQEEKESN) shows a compositional bias: basic and acidic residues.

Belongs to the WD repeat WDR55 family. Interacts with BRE1, BUD27 and GIS1.

The protein localises to the nucleus. The protein resides in the nucleolus. This is WD repeat-containing protein JIP5 (JIP5) from Saccharomyces cerevisiae (strain YJM789) (Baker's yeast).